The chain runs to 70 residues: Small ribosomal subunit protein bS21 (70 aa).

This sequence belongs to the bacterial ribosomal protein bS21 family.

This is Small ribosomal subunit protein bS21 from Nitratiruptor sp. (strain SB155-2).